Reading from the N-terminus, the 116-residue chain is Photosystem II assembly factor Psb28 protein (116 aa).

The protein belongs to the Psb28 family. In terms of assembly, part of a photosystem II (PSII) assembly intermediate complex PSII-I; crystallized from a strain deleted of psbJ, it forms monomeric PSII before addition of the oxygen evolving complex. PSII-I includes 3 assembly factors not found in mature PSII (Psb27, Psb28 and Psb34). This protein binds to the cytoplasmic face of D1 and D2 (psbA and psbD), contacting CP47 (psbB) directly above the quinone b-binding site.

Its subcellular location is the cellular thylakoid membrane. A photosystem II (PSII) assembly factor that binds PSII during biogenesis, protecting the complex until water splitting is activated. In Thermosynechococcus vestitus (strain NIES-2133 / IAM M-273 / BP-1), this protein is Photosystem II assembly factor Psb28 protein.